Consider the following 187-residue polypeptide: ATP-dependent protease subunit HslV (187 aa).

Threonine 13 is a catalytic residue. Na(+) contacts are provided by alanine 172, cysteine 175, and threonine 178.

The protein belongs to the peptidase T1B family. HslV subfamily. As to quaternary structure, a double ring-shaped homohexamer of HslV is capped on each side by a ring-shaped HslU homohexamer. The assembly of the HslU/HslV complex is dependent on binding of ATP.

The protein resides in the cytoplasm. The enzyme catalyses ATP-dependent cleavage of peptide bonds with broad specificity.. Allosterically activated by HslU binding. Protease subunit of a proteasome-like degradation complex believed to be a general protein degrading machinery. In Caulobacter sp. (strain K31), this protein is ATP-dependent protease subunit HslV.